The sequence spans 445 residues: Tubulin beta chain (445 aa).

GTP contacts are provided by Gln-11, Glu-69, Ser-138, Gly-142, Thr-143, Gly-144, Asn-205, and Asn-227. Mg(2+) is bound at residue Glu-69.

This sequence belongs to the tubulin family. As to quaternary structure, dimer of alpha and beta chains. A typical microtubule is a hollow water-filled tube with an outer diameter of 25 nm and an inner diameter of 15 nM. Alpha-beta heterodimers associate head-to-tail to form protofilaments running lengthwise along the microtubule wall with the beta-tubulin subunit facing the microtubule plus end conferring a structural polarity. Microtubules usually have 13 protofilaments but different protofilament numbers can be found in some organisms and specialized cells. It depends on Mg(2+) as a cofactor.

The protein resides in the cytoplasm. Its subcellular location is the cytoskeleton. Functionally, tubulin is the major constituent of microtubules, a cylinder consisting of laterally associated linear protofilaments composed of alpha- and beta-tubulin heterodimers. Microtubules grow by the addition of GTP-tubulin dimers to the microtubule end, where a stabilizing cap forms. Below the cap, tubulin dimers are in GDP-bound state, owing to GTPase activity of alpha-tubulin. The sequence is that of Tubulin beta chain (TUB2) from Ajellomyces capsulatus (Darling's disease fungus).